Reading from the N-terminus, the 763-residue chain is High glucose sensor RGT2 (763 aa).

The tract at residues 1–28 is disordered; the sequence is MNDSQNCLRQREENSHLNPGNDFGHHQG. Topologically, residues 1–99 are cytoplasmic; sequence MNDSQNCLRQ…PLPLRSNVMS (99 aa). The helical transmembrane segment at 100-120 threads the bilayer; that stretch reads VLVGIFVAVGGFLFGYDTGLI. Topologically, residues 121–144 are extracellular; sequence NSITDMPYVKTYIAPNHSYFTTSQ. The N-linked (GlcNAc...) asparagine glycan is linked to N136. The chain crosses the membrane as a helical span at residues 145 to 165; the sequence is IAILVSFLSLGTFFGALIAPY. The Cytoplasmic segment spans residues 166–175; the sequence is ISDSYGRKPT. The helical transmembrane segment at 176-196 threads the bilayer; it reads IMFSTAVIFSIGNSLQVASGG. A topological domain (extracellular) is located at residue L197. The helical transmembrane segment at 198–218 threads the bilayer; that stretch reads VLLIVGRVISGIGIGIISAVV. Topologically, residues 219 to 231 are cytoplasmic; that stretch reads PLYQAEAAQKNLR. A helical membrane pass occupies residues 232–252; sequence GAIISSYQWAITIGLLVSSAV. Over 253–266 the chain is Extracellular; sequence SQGTHSKNGPSSYR. Residues 267–287 form a helical membrane-spanning segment; it reads IPIGLQYVWSSILAVGMIFLP. Over 288–357 the chain is Cytoplasmic; that stretch reads ESPRYYVLKD…SENRPKQILR (70 aa). The helical transmembrane segment at 358–378 threads the bilayer; the sequence is IFTGIAIQAFQQASGINFIFY. Residues 379-393 lie on the Extracellular side of the membrane; sequence YGVNFFNNTGVDNSY. An N-linked (GlcNAc...) asparagine glycan is attached at N385. Residues 394–414 traverse the membrane as a helical segment; that stretch reads LVSFISYAVNVAFSIPGMYLV. Over 415–421 the chain is Cytoplasmic; sequence DRIGRRP. Residues 422-442 traverse the membrane as a helical segment; the sequence is VLLAGGVIMAIANLVIAIVGV. The Extracellular segment spans residues 443–452; the sequence is SEGKTVVASK. Residues 453–473 traverse the membrane as a helical segment; it reads IMIAFICLFIAAFSATWGGVV. Residues 474-491 lie on the Cytoplasmic side of the membrane; it reads WVVSAELYPLGVRSKCTA. Residues 492 to 512 traverse the membrane as a helical segment; sequence ICAAANWLVNFTCALITPYIV. Residues 513–524 lie on the Extracellular side of the membrane; it reads DVGSHTSSMGPK. Residues 525 to 545 traverse the membrane as a helical segment; it reads IFFIWGGLNVVAVIVVYFAVY. Over 546 to 763 the chain is Cytoplasmic; sequence ETRGLTLEEI…SKHSQYTSPQ (218 aa). The span at 725-737 shows a compositional bias: low complexity; that stretch reads SSTTSNDTSFSPS. The disordered stretch occupies residues 725 to 763; the sequence is SSTTSNDTSFSPSHNSNARTSSNWTSDLASKHSQYTSPQ. Positions 738-763 are enriched in polar residues; sequence HNSNARTSSNWTSDLASKHSQYTSPQ.

This sequence belongs to the major facilitator superfamily. Sugar transporter (TC 2.A.1.1) family. As to quaternary structure, interacts with YCK1. Interacts with MTH1 and STD1. Phosphorylated in the C-terminal tail on Yck consensus sites in a yeast casein kinases YCK1 and YCK2 (Yck)-dependent manner. This phosphorylation is required for interaction with HXT corepressors MTH1 and STD1 and ultimately HXT expression.

The protein resides in the cell membrane. Its function is as follows. Low-affinity high glucose sensor that is part of the sensor/receptor-repressor (SSR) glucose-signaling pathway, which detects extracellular glucose and induces expression of glucose transporters that bring glucose into the cell. The transporter-like sensor generates an intracellular signal in the presence of high levels of glucose to promote high glucose-induced expression of HXT1. Binding of glucose to the RGT2 transmembrane domain activates a downstream signaling cascade, leading to phosphorylation of the RGT1 corepressors MTH1 and STD1, targeting them for SCF(Grr1)-dependent ubiquitination and degradation. Depletion of the corepressors robs RGT1 of its ability to repress expression of HXT genes, leading to accumulation of glucose transporters in the plasma membrane. Even though RGT2 is similar to glucose transporters, it appears to be unable to transport glucose. This Saccharomyces cerevisiae (strain ATCC 204508 / S288c) (Baker's yeast) protein is High glucose sensor RGT2.